Reading from the N-terminus, the 259-residue chain is UPF0246 protein PFL_1025 (259 aa).

Belongs to the UPF0246 family.

The protein is UPF0246 protein PFL_1025 of Pseudomonas fluorescens (strain ATCC BAA-477 / NRRL B-23932 / Pf-5).